The chain runs to 75 residues: Small ribosomal subunit protein bS18 (75 aa).

The protein belongs to the bacterial ribosomal protein bS18 family. As to quaternary structure, part of the 30S ribosomal subunit. Forms a tight heterodimer with protein bS6.

In terms of biological role, binds as a heterodimer with protein bS6 to the central domain of the 16S rRNA, where it helps stabilize the platform of the 30S subunit. In Histophilus somni (strain 129Pt) (Haemophilus somnus), this protein is Small ribosomal subunit protein bS18.